The following is a 243-amino-acid chain: DNA repair protein RecO (243 aa).

It belongs to the RecO family.

In terms of biological role, involved in DNA repair and RecF pathway recombination. The sequence is that of DNA repair protein RecO from Beutenbergia cavernae (strain ATCC BAA-8 / DSM 12333 / CCUG 43141 / JCM 11478 / NBRC 16432 / NCIMB 13614 / HKI 0122).